A 192-amino-acid chain; its full sequence is Nucleosome assembly protein 1-like 5 (192 aa).

Positions Met1–Pro12 are enriched in polar residues. The tract at residues Met1–Glu76 is disordered. 2 stretches are compositionally biased toward low complexity: residues Ala15–Ala28 and Gly40–Gln55. Residues Val86–Lys112 adopt a coiled-coil conformation. The tract at residues Ala136–Lys192 is disordered. Positions Glu140–Ala168 are enriched in acidic residues. Residues Ala177–Lys192 show a composition bias toward basic and acidic residues.

This sequence belongs to the nucleosome assembly protein (NAP) family.

It localises to the nucleus. This chain is Nucleosome assembly protein 1-like 5 (NAP1L5), found in Bos taurus (Bovine).